Here is an 82-residue protein sequence, read N- to C-terminus: Exodeoxyribonuclease 7 small subunit (82 aa).

It belongs to the XseB family. In terms of assembly, heterooligomer composed of large and small subunits.

It is found in the cytoplasm. It catalyses the reaction Exonucleolytic cleavage in either 5'- to 3'- or 3'- to 5'-direction to yield nucleoside 5'-phosphates.. In terms of biological role, bidirectionally degrades single-stranded DNA into large acid-insoluble oligonucleotides, which are then degraded further into small acid-soluble oligonucleotides. The polypeptide is Exodeoxyribonuclease 7 small subunit (Sodalis glossinidius (strain morsitans)).